Consider the following 241-residue polypeptide: MIDLSGQTALITGASGGIGGAIARQLHKLGSHVIISGSNEEKLKALGNDLKDNYTIKVCNLTNTEECSNLVAQIEKLDILVCNAGITKDTLAIRMKNEDFDQVIDINLKANFILNREAIKKMMTNRYGRIINITSIVGVSGNPGQANYCASKAGLIGMTKSLAYEVATRGITVNAVAPGFIKSDMTDKLNDEQKEAITRKIPKGTYGMPEDIANAVAFLASKQSSYITGQTLHVNGGMLMV.

NADP(+) contacts are provided by residues 13–16 (GASG), Ser-38, 57–58 (KV), and Asn-83. Substrate is bound at residue Ser-135. Catalysis depends on Tyr-148, which acts as the Proton acceptor. Residues 148–152 (YCASK) and Ile-181 contribute to the NADP(+) site.

The protein belongs to the short-chain dehydrogenases/reductases (SDR) family. Homotetramer.

The catalysed reaction is a (3R)-hydroxyacyl-[ACP] + NADP(+) = a 3-oxoacyl-[ACP] + NADPH + H(+). The protein operates within lipid metabolism; fatty acid biosynthesis. Functionally, catalyzes the NADPH-dependent reduction of beta-ketoacyl-ACP substrates to beta-hydroxyacyl-ACP products, the first reductive step in the elongation cycle of fatty acid biosynthesis. In Rickettsia bellii (strain RML369-C), this protein is 3-oxoacyl-[acyl-carrier-protein] reductase FabG (fabG).